The primary structure comprises 209 residues: Uracil phosphoribosyltransferase (209 aa).

5-phospho-alpha-D-ribose 1-diphosphate contacts are provided by residues arginine 79, arginine 104, and 131-139 (DPMLATGGS). Uracil is bound by residues isoleucine 194 and 199-201 (GDA). Position 200 (aspartate 200) interacts with 5-phospho-alpha-D-ribose 1-diphosphate.

The protein belongs to the UPRTase family. Requires Mg(2+) as cofactor.

It catalyses the reaction UMP + diphosphate = 5-phospho-alpha-D-ribose 1-diphosphate + uracil. Its pathway is pyrimidine metabolism; UMP biosynthesis via salvage pathway; UMP from uracil: step 1/1. With respect to regulation, allosterically activated by GTP. Functionally, catalyzes the conversion of uracil and 5-phospho-alpha-D-ribose 1-diphosphate (PRPP) to UMP and diphosphate. The polypeptide is Uracil phosphoribosyltransferase (Halalkalibacterium halodurans (strain ATCC BAA-125 / DSM 18197 / FERM 7344 / JCM 9153 / C-125) (Bacillus halodurans)).